Consider the following 929-residue polypeptide: Chaperone protein ClpC1, chloroplastic (929 aa).

Residues 1 to 38 constitute a chloroplast transit peptide; that stretch reads MAMATRVLAQSTPPSLACYQRNVPSRGSGRSRRSVKMM. A Clp R domain is found at 95-237; sequence FERFTEKAIK…RTQVIRMVGE (143 aa). Repeat regions lie at residues 98-163 and 173-237; these read FTEK…IGRG and FTPR…MVGE. The tract at residues 257 to 504 is i; it reads LEEYGTNLTK…RVRLRHAQVP (248 aa). Position 302-309 (302-309) interacts with ATP; the sequence is GEPGVGKT. One can recognise a UVR domain in the interval 511 to 546; the sequence is EKELRQITKEKNEAVRGQDFEKAGTLRDREIELRAE. Residues 552 to 571 form a disordered region; that stretch reads AKGKEMSKAESETGEEGPMV. The span at 553 to 562 shows a compositional bias: basic and acidic residues; the sequence is KGKEMSKAES. Residues 571 to 762 are II; that stretch reads VTESDIQHIV…LLIMTSNVGS (192 aa). 645–652 is a binding site for ATP; the sequence is GPTGVGKS. A compositionally biased stretch (polar residues) spans 908–919; sequence LNGGSGTPTTSL. Residues 908-929 form a disordered region; it reads LNGGSGTPTTSLEEQEDSLPVA. A compositionally biased stretch (acidic residues) spans 920 to 929; it reads EEQEDSLPVA.

The protein belongs to the ClpA/ClpB family. ClpC subfamily. As to quaternary structure, homodimer. May form hexamer and interact with Clp core. Interacts (via N-terminus) with CLPS1. Interacts with CLPF. Highly expressed in rosette leaves. Expressed in roots, stems and inflorescences. Expressed in photosynthetic green tissues with high levels in young, developing leaf tissues.

It is found in the plastid. It localises to the chloroplast stroma. The protein resides in the chloroplast membrane. Its function is as follows. Molecular chaperone that hydrolyzes ATP and is associated with the chloroplast protein import apparatus. May function as the motor for chloroplast protein translocation, as translocation requires ATP hydrolysis in the stroma. May interact with a ClpP-like protease involved in degradation of denatured proteins in the chloroplast. Involved in the regulation of chlorophyll b biosynthesis through the destabilization of chlorophyllide a oxygenase (CAO) protein in response to the accumulation of chlorophyll b. Involved in leaf iron homeostasis. The polypeptide is Chaperone protein ClpC1, chloroplastic (Arabidopsis thaliana (Mouse-ear cress)).